Reading from the N-terminus, the 394-residue chain is THAP domain-containing protein 5 (394 aa).

The THAP-type zinc-finger motif lies at 1–84 (MPRYCAAICC…LKQTAIPTIF (84 aa)). Positions 86–109 (LPEDNQEKDPSKKKSQKKKLKSEK) are disordered. The HCFC1-binding motif (HBM) signature appears at 320–323 (EHSY). Positions 347–381 (LELQEQQTLGRLKSLEALIRQLKQENWLSEENVKI) form a coiled coil.

Interacts with HTRA2; under apoptotic conditions. Interacts with ABRAXAS2. Cleaved by HTRA2 during apoptosis.

The protein localises to the nucleus. In terms of biological role, has sequence-specific DNA-binding activity and can function as transcriptional repressor (in vitro). May be a regulator of cell cycle: THAP5 overexpression in human cell lines causes cell cycle arrest at G2/M phase. This Bos taurus (Bovine) protein is THAP domain-containing protein 5 (THAP5).